The primary structure comprises 909 residues: Protein virilizer (909 aa).

Polar residues predominate over residues 746 to 784; sequence STSKNTNTNVSKQQQQPQNSTPCSSNRFLFNKSSLISQE. A disordered region spans residues 746 to 824; sequence STSKNTNTNV…TNMTRQPTTL (79 aa). Residues 785 to 799 are compositionally biased toward low complexity; that stretch reads SNGSNNNSGTQGPGS. The segment covering 800–810 has biased composition (polar residues); the sequence is MNESYSLDNSF. Low complexity predominate over residues 811–824; that stretch reads NTTNTNMTRQPTTL. A phosphoserine mark is found at S856 and S898.

Belongs to the vir family. In terms of assembly, component of the MIS (mRNA N6-methyladenosine (m6A) methylation) complex, at least composed of IME4, KAR4, MUM2, SLZ1, and VIR1. Interacts with KAR4. Interacts with SLZ1. Interacts with MUM2. Interacts with IME4.

The protein resides in the cytoplasm. The protein localises to the nucleus. It localises to the nucleolus. In terms of biological role, component of the MIS complex, a complex that mediates N6-methyladenosine (m6A) methylation of meiotic mRNAs and is required for initiation of meiosis, progression through the meiotic divisions and sporulation. In the complex, performs a scaffolding role stabilizing the other complex members. The protein is Protein virilizer of Saccharomyces cerevisiae (strain ATCC 204508 / S288c) (Baker's yeast).